The primary structure comprises 199 residues: Protein Thf1 (199 aa).

A coiled-coil region spans residues 167 to 198 (QYSRVEKDISMYKSNIEKMKQALEIIALNLKT).

Belongs to the THF1 family.

Functionally, may be involved in photosynthetic membrane biogenesis. This Prochlorococcus marinus (strain NATL1A) protein is Protein Thf1.